We begin with the raw amino-acid sequence, 157 residues long: Small ribosomal subunit protein uS7 (157 aa).

The protein belongs to the universal ribosomal protein uS7 family. In terms of assembly, part of the 30S ribosomal subunit. Contacts proteins S9 and S11.

One of the primary rRNA binding proteins, it binds directly to 16S rRNA where it nucleates assembly of the head domain of the 30S subunit. Is located at the subunit interface close to the decoding center, probably blocks exit of the E-site tRNA. The sequence is that of Small ribosomal subunit protein uS7 from Leptospira borgpetersenii serovar Hardjo-bovis (strain JB197).